The primary structure comprises 511 residues: Ribose import ATP-binding protein RbsA (511 aa).

ABC transporter domains lie at 13 to 249 (VSMD…VGRA) and 260 to 503 (ALGE…AGIA). 45–52 (GENGAGKS) contributes to the ATP binding site.

This sequence belongs to the ABC transporter superfamily. Ribose importer (TC 3.A.1.2.1) family. In terms of assembly, the complex is composed of an ATP-binding protein (RbsA), two transmembrane proteins (RbsC) and a solute-binding protein (RbsB).

The protein resides in the cell inner membrane. It carries out the reaction D-ribose(out) + ATP + H2O = D-ribose(in) + ADP + phosphate + H(+). Part of the ABC transporter complex RbsABC involved in ribose import. Responsible for energy coupling to the transport system. This Roseobacter denitrificans (strain ATCC 33942 / OCh 114) (Erythrobacter sp. (strain OCh 114)) protein is Ribose import ATP-binding protein RbsA.